The primary structure comprises 336 residues: MNTLRTAMLLAAMTALFMGVGFLIGGSGGMMIALLIAAGTNLFSYWNADKMVLSMNRAVEVDEKNAPEYYAIVQALAKQAGLPMPRTYLIDNPQPNAFATGRNPQNAAVAASTGLLQRLTHEEVAAVMAHELAHVQHRDTLTMTIVATFAGAISMLGNFAFFLGGNRDNNPFGFVGVLAAMIVAPFAAMIVQMAVSRTREYEADRRGAEICGHPLWLASALDKIARGAERIPNPDAERNPAMAHLFIINPLHGERMDNLFSTHPSTDNRIAALQEMAQQMAGGTQAAPRPTPRQAGEQQPSGPWGQAPQAEQPAEPERPKANPWGRNPTGPKGRWS.

A run of 2 helical transmembrane segments spans residues 7–24 (AMLLAAMTALFMGVGFLI) and 29–48 (GMMIALLIAAGTNLFSYWNA). Residue histidine 130 participates in Zn(2+) binding. Glutamate 131 is an active-site residue. Histidine 134 provides a ligand contact to Zn(2+). The next 2 helical transmembrane spans lie at 145–165 (IVATFAGAISMLGNFAFFLGG) and 171–191 (PFGFVGVLAAMIVAPFAAMIV). Glutamate 200 lines the Zn(2+) pocket. Low complexity predominate over residues 278-287 (QQMAGGTQAA). The tract at residues 278 to 336 (QQMAGGTQAAPRPTPRQAGEQQPSGPWGQAPQAEQPAEPERPKANPWGRNPTGPKGRWS) is disordered.

This sequence belongs to the peptidase M48B family. Zn(2+) serves as cofactor.

The protein resides in the cell inner membrane. The chain is Protease HtpX homolog from Mesorhizobium japonicum (strain LMG 29417 / CECT 9101 / MAFF 303099) (Mesorhizobium loti (strain MAFF 303099)).